Consider the following 450-residue polypeptide: Phosphoglucosamine mutase (450 aa).

Ser103 acts as the Phosphoserine intermediate in catalysis. Ser103, Asp243, Asp245, and Asp247 together coordinate Mg(2+). The residue at position 103 (Ser103) is a Phosphoserine.

It belongs to the phosphohexose mutase family. The cofactor is Mg(2+). Activated by phosphorylation.

The catalysed reaction is alpha-D-glucosamine 1-phosphate = D-glucosamine 6-phosphate. Its function is as follows. Catalyzes the conversion of glucosamine-6-phosphate to glucosamine-1-phosphate. This is Phosphoglucosamine mutase from Latilactobacillus sakei subsp. sakei (strain 23K) (Lactobacillus sakei subsp. sakei).